A 501-amino-acid polypeptide reads, in one-letter code: Glycerol kinase (501 aa).

T14 contacts ADP. Residues T14, T15, and S16 each contribute to the ATP site. T14 is a sn-glycerol 3-phosphate binding site. R18 serves as a coordination point for ADP. Sn-glycerol 3-phosphate contacts are provided by R84, E85, Y135, and D244. Residues R84, E85, Y135, D244, and Q245 each contribute to the glycerol site. 2 residues coordinate ADP: T266 and G309. 4 residues coordinate ATP: T266, G309, Q313, and G410. G410 and N414 together coordinate ADP.

This sequence belongs to the FGGY kinase family.

It carries out the reaction glycerol + ATP = sn-glycerol 3-phosphate + ADP + H(+). Its pathway is polyol metabolism; glycerol degradation via glycerol kinase pathway; sn-glycerol 3-phosphate from glycerol: step 1/1. Its activity is regulated as follows. Inhibited by fructose 1,6-bisphosphate (FBP). Key enzyme in the regulation of glycerol uptake and metabolism. Catalyzes the phosphorylation of glycerol to yield sn-glycerol 3-phosphate. The sequence is that of Glycerol kinase from Deinococcus radiodurans (strain ATCC 13939 / DSM 20539 / JCM 16871 / CCUG 27074 / LMG 4051 / NBRC 15346 / NCIMB 9279 / VKM B-1422 / R1).